Consider the following 379-residue polypeptide: Chaperone protein DnaJ (379 aa).

The J domain occupies 5-70; sequence DYYEILGVPK…QKRAAYDQYG (66 aa). The CR-type zinc finger occupies 134-212; that stretch reads GVTKEIRIPT…CHGHGRIEKT (79 aa). Residues Cys147, Cys150, Cys164, Cys167, Cys186, Cys189, Cys200, and Cys203 each coordinate Zn(2+). 4 CXXCXGXG motif repeats span residues 147-154, 164-171, 186-193, and 200-207; these read CEVCHGSG, CPTCHGAG, CPHCQGRG, and CNSCHGHG.

Belongs to the DnaJ family. Homodimer. Zn(2+) serves as cofactor.

The protein localises to the cytoplasm. Functionally, participates actively in the response to hyperosmotic and heat shock by preventing the aggregation of stress-denatured proteins and by disaggregating proteins, also in an autonomous, DnaK-independent fashion. Unfolded proteins bind initially to DnaJ; upon interaction with the DnaJ-bound protein, DnaK hydrolyzes its bound ATP, resulting in the formation of a stable complex. GrpE releases ADP from DnaK; ATP binding to DnaK triggers the release of the substrate protein, thus completing the reaction cycle. Several rounds of ATP-dependent interactions between DnaJ, DnaK and GrpE are required for fully efficient folding. Also involved, together with DnaK and GrpE, in the DNA replication of plasmids through activation of initiation proteins. The polypeptide is Chaperone protein DnaJ (Cronobacter sakazakii (strain ATCC BAA-894) (Enterobacter sakazakii)).